Reading from the N-terminus, the 251-residue chain is Ubiquinone/menaquinone biosynthesis C-methyltransferase UbiE (251 aa).

Residues T74, D95, 123 to 124 (NA), and S140 contribute to the S-adenosyl-L-methionine site.

It belongs to the class I-like SAM-binding methyltransferase superfamily. MenG/UbiE family.

It catalyses the reaction a 2-demethylmenaquinol + S-adenosyl-L-methionine = a menaquinol + S-adenosyl-L-homocysteine + H(+). It carries out the reaction a 2-methoxy-6-(all-trans-polyprenyl)benzene-1,4-diol + S-adenosyl-L-methionine = a 5-methoxy-2-methyl-3-(all-trans-polyprenyl)benzene-1,4-diol + S-adenosyl-L-homocysteine + H(+). Its pathway is quinol/quinone metabolism; menaquinone biosynthesis; menaquinol from 1,4-dihydroxy-2-naphthoate: step 2/2. It functions in the pathway cofactor biosynthesis; ubiquinone biosynthesis. Functionally, methyltransferase required for the conversion of demethylmenaquinol (DMKH2) to menaquinol (MKH2) and the conversion of 2-polyprenyl-6-methoxy-1,4-benzoquinol (DDMQH2) to 2-polyprenyl-3-methyl-6-methoxy-1,4-benzoquinol (DMQH2). The sequence is that of Ubiquinone/menaquinone biosynthesis C-methyltransferase UbiE from Salmonella paratyphi A (strain AKU_12601).